Consider the following 72-residue polypeptide: MSKQDVIEFDGEVIETLPNTMFKVRLENGHEILAHISGRMRKNYIRILAGDKVKVELTPYDLTKGRITYRGK.

One can recognise an S1-like domain in the interval methionine 1–lysine 72.

It belongs to the IF-1 family. Component of the 30S ribosomal translation pre-initiation complex which assembles on the 30S ribosome in the order IF-2 and IF-3, IF-1 and N-formylmethionyl-tRNA(fMet); mRNA recruitment can occur at any time during PIC assembly.

The protein resides in the cytoplasm. Its function is as follows. One of the essential components for the initiation of protein synthesis. Stabilizes the binding of IF-2 and IF-3 on the 30S subunit to which N-formylmethionyl-tRNA(fMet) subsequently binds. Helps modulate mRNA selection, yielding the 30S pre-initiation complex (PIC). Upon addition of the 50S ribosomal subunit IF-1, IF-2 and IF-3 are released leaving the mature 70S translation initiation complex. The sequence is that of Translation initiation factor IF-1 from Hydrogenovibrio crunogenus (strain DSM 25203 / XCL-2) (Thiomicrospira crunogena).